The sequence spans 465 residues: Siroheme synthase (465 aa).

The tract at residues 1–203 is precorrin-2 dehydrogenase /sirohydrochlorin ferrochelatase; the sequence is MEYLPLFHNL…GRTAEAERLL (203 aa). NAD(+) contacts are provided by residues 22–23 and 43–44; these read EI and PS. The residue at position 128 (Ser-128) is a Phosphoserine. A uroporphyrinogen-III C-methyltransferase region spans residues 216–465; it reads GEVYLVGAGP…WFEGAQAAGR (250 aa). Pro-225 lines the S-adenosyl-L-methionine pocket. Catalysis depends on Asp-248, which acts as the Proton acceptor. Catalysis depends on Lys-270, which acts as the Proton donor. S-adenosyl-L-methionine-binding positions include 301–303, Ile-306, 331–332, Met-383, and Gly-412; these read GGD and TA.

In the N-terminal section; belongs to the precorrin-2 dehydrogenase / sirohydrochlorin ferrochelatase family. It in the C-terminal section; belongs to the precorrin methyltransferase family.

The enzyme catalyses uroporphyrinogen III + 2 S-adenosyl-L-methionine = precorrin-2 + 2 S-adenosyl-L-homocysteine + H(+). The catalysed reaction is precorrin-2 + NAD(+) = sirohydrochlorin + NADH + 2 H(+). It carries out the reaction siroheme + 2 H(+) = sirohydrochlorin + Fe(2+). It functions in the pathway cofactor biosynthesis; adenosylcobalamin biosynthesis; precorrin-2 from uroporphyrinogen III: step 1/1. The protein operates within cofactor biosynthesis; adenosylcobalamin biosynthesis; sirohydrochlorin from precorrin-2: step 1/1. Its pathway is porphyrin-containing compound metabolism; siroheme biosynthesis; precorrin-2 from uroporphyrinogen III: step 1/1. It participates in porphyrin-containing compound metabolism; siroheme biosynthesis; siroheme from sirohydrochlorin: step 1/1. It functions in the pathway porphyrin-containing compound metabolism; siroheme biosynthesis; sirohydrochlorin from precorrin-2: step 1/1. Multifunctional enzyme that catalyzes the SAM-dependent methylations of uroporphyrinogen III at position C-2 and C-7 to form precorrin-2 via precorrin-1. Then it catalyzes the NAD-dependent ring dehydrogenation of precorrin-2 to yield sirohydrochlorin. Finally, it catalyzes the ferrochelation of sirohydrochlorin to yield siroheme. The protein is Siroheme synthase of Stutzerimonas stutzeri (strain A1501) (Pseudomonas stutzeri).